Reading from the N-terminus, the 450-residue chain is MNNKRHSTNEQLSLDEINNTIKFDHRSSNKQKFLSFLGPGLLVAGGYMDSGNWITSMQGGAQYGYTLLFGNLISRLSAMLLQSMTVRLGIATGMDLAQMTRHYLSRPIAIIFWIIAELAIIATDIAEVIGSAIALNLLFNIPLIVGALITVLDVFLLLFIMKYGFRKIEAIVGTLIFTVLFIFIFEVYISSPQLNAVLNGFIPHSEIITNNGILYIALGIIGATIMPHNLYLHSSIVQSRTYSRHNNEEKAQAIKFATIDSNIQLSIAFVVNCLLLVLGASLFFNSNADDLGGFYDLYHALKTEPVLGATMGAIMSTLFAVALLASGQNSTITGTLAGQIVMEGFLRLHIPNWLRRLITRSLAVIPVIVCLIIFKGNAAKIEQLLVFSQVFLSIALPFCLIPLQLATSNKDLMGPFYNKTWVNIISWTLIIILSILNVYLIVQTFQELQG.

11 helical membrane-spanning segments follow: residues 34–54, 59–81, 108–128, 141–161, 170–190, 212–232, 263–283, 305–325, 361–381, 383–403, and 422–442; these read LSFL…GNWI, GGAQ…AMLL, IAII…IAEV, IPLI…LFIM, AIVG…VYIS, GILY…NLYL, IQLS…ASLF, PVLG…ALLA, SLAV…AAKI, QLLV…LIPL, and VNII…YLIV.

This sequence belongs to the NRAMP family.

The protein resides in the cell membrane. Functionally, h(+)-stimulated, divalent metal cation uptake system. This is Divalent metal cation transporter MntH from Staphylococcus aureus (strain MRSA252).